The sequence spans 366 residues: MSGNTLGTLFCVTNFGESHGPAIGCVIDGCPPGMELSEADIQADLDRRRPGTSRHVTQRNEPDAVEILSGVYEGKTTGTPIALLIRNTDQRSKDYGNIAQSFRPGHADYAYWHKYGLRDPRGGGRSSARLTAPTVAAGAVAKKWLAEKYGTRFRACMTQLGELPIPFESWEHVPHNPFFAPVADVQAYEDYMDALRKSGDSCGARIRVQATGVPVGLGDPLYDKLDADIAHVMMGLNAVKGVEIGAGFASVAQRGTTHGDSLTPTGFASNNAGGVLGGISTGQDIEVSLAIKPTSSIISPRESIDIHGQSTEVITKGRHDPCVGIRAAPIAEALLALVIMDHALRHRAQCGDVVQAVAPIPAVRLG.

Residues R48 and R54 each coordinate NADP(+). FMN is bound by residues 125-127 (RSS), 237-238 (NA), G277, 292-296 (KPTSS), and R318.

This sequence belongs to the chorismate synthase family. As to quaternary structure, homotetramer. It depends on FMNH2 as a cofactor.

It carries out the reaction 5-O-(1-carboxyvinyl)-3-phosphoshikimate = chorismate + phosphate. Its pathway is metabolic intermediate biosynthesis; chorismate biosynthesis; chorismate from D-erythrose 4-phosphate and phosphoenolpyruvate: step 7/7. Its function is as follows. Catalyzes the anti-1,4-elimination of the C-3 phosphate and the C-6 proR hydrogen from 5-enolpyruvylshikimate-3-phosphate (EPSP) to yield chorismate, which is the branch point compound that serves as the starting substrate for the three terminal pathways of aromatic amino acid biosynthesis. This reaction introduces a second double bond into the aromatic ring system. The protein is Chorismate synthase of Acidovorax sp. (strain JS42).